Consider the following 88-residue polypeptide: Conotoxin Ca8.3 (88 aa).

Residues 1–21 (MMLKMGAMFVLLLLFILPSSQ) form the signal peptide. Residues 22 to 46 (QEGDVQARKTHLKSGFYGTLAMSTR) constitute a propeptide that is removed on maturation.

Belongs to the conotoxin S superfamily. In terms of processing, contains 5 disulfide bonds. Expressed by the venom duct.

It is found in the secreted. In Conus caracteristicus (Characteristic cone), this protein is Conotoxin Ca8.3.